We begin with the raw amino-acid sequence, 111 residues long: T cell receptor beta variable 20-1 (111 aa).

The first 15 residues, 1–15 (MLLLLLLLGPGSGLG), serve as a signal peptide directing secretion. The region spanning 16–111 (AVVSQHPSRV…DSSFYICSAR (96 aa)) is the Ig-like domain. C37 and C108 form a disulfide bridge.

Alpha-beta TR is a heterodimer composed of an alpha and beta chain; disulfide-linked. The alpha-beta TR is associated with the transmembrane signaling CD3 coreceptor proteins to form the TR-CD3 (TcR or TCR). The assembly of alpha-beta TR heterodimers with CD3 occurs in the endoplasmic reticulum where a single alpha-beta TR heterodimer associates with one CD3D-CD3E heterodimer, one CD3G-CD3E heterodimer and one CD247 homodimer forming a stable octameric structure. CD3D-CD3E and CD3G-CD3E heterodimers preferentially associate with TR alpha and TR beta chains, respectively. The association of the CD247 homodimer is the last step of TcR assembly in the endoplasmic reticulum and is required for transport to the cell surface.

Its subcellular location is the cell membrane. In terms of biological role, v region of the variable domain of T cell receptor (TR) beta chain that participates in the antigen recognition. Alpha-beta T cell receptors are antigen specific receptors which are essential to the immune response and are present on the cell surface of T lymphocytes. Recognize peptide-major histocompatibility (MH) (pMH) complexes that are displayed by antigen presenting cells (APC), a prerequisite for efficient T cell adaptive immunity against pathogens. Binding of alpha-beta TR to pMH complex initiates TR-CD3 clustering on the cell surface and intracellular activation of LCK that phosphorylates the ITAM motifs of CD3G, CD3D, CD3E and CD247 enabling the recruitment of ZAP70. In turn ZAP70 phosphorylates LAT, which recruits numerous signaling molecules to form the LAT signalosome. The LAT signalosome propagates signal branching to three major signaling pathways, the calcium, the mitogen-activated protein kinase (MAPK) kinase and the nuclear factor NF-kappa-B (NF-kB) pathways, leading to the mobilization of transcription factors that are critical for gene expression and essential for T cell growth and differentiation. The T cell repertoire is generated in the thymus, by V-(D)-J rearrangement. This repertoire is then shaped by intrathymic selection events to generate a peripheral T cell pool of self-MH restricted, non-autoaggressive T cells. Post-thymic interaction of alpha-beta TR with the pMH complexes shapes TR structural and functional avidity. This is T cell receptor beta variable 20-1 from Homo sapiens (Human).